Here is a 50-residue protein sequence, read N- to C-terminus: Light-harvesting protein B-880 alpha chain (50 aa).

At 1–12 (MYKLWLLFDPRR) the chain is on the cytoplasmic side. A helical transmembrane segment spans residues 13-33 (ALVALSAFLFVLALIIHFIAL). An a bacteriochlorophyll-binding site is contributed by His-29. Topologically, residues 34–50 (STDRFNWLEGKPAVKAA) are periplasmic.

The protein belongs to the antenna complex alpha subunit family. In terms of assembly, the core complex is formed by different alpha and beta chains, binding bacteriochlorophyll molecules, and arranged most probably in tetrameric structures disposed around the reaction center. The non-pigmented gamma chains may constitute additional components.

The protein resides in the cell inner membrane. Antenna complexes are light-harvesting systems, which transfer the excitation energy to the reaction centers. The chain is Light-harvesting protein B-880 alpha chain from Rhodoblastus acidophilus (Rhodopseudomonas acidophila).